Here is a 395-residue protein sequence, read N- to C-terminus: Acid ceramidase (395 aa).

Residues 1-21 (MLGRSRLTFVLLAAAVTCAEA) form the signal peptide. Cys31 and Cys340 are oxidised to a cystine. Cys143 acts as the Nucleophile in catalysis. Asn173, Asn259, Asn286, and Asn348 each carry an N-linked (GlcNAc...) asparagine glycan. Cys388 and Cys392 form a disulfide bridge.

The protein belongs to the acid ceramidase family. As to quaternary structure, heterodimer; disulfide-linked. The heterodimer is composed of the disulfide-linked alpha and beta chains produced by autocatalytic cleavage of the precursor. Post-translationally, N-glycosylated. In terms of processing, proteolytically cleaved into two chains alpha and beta that remain associated via a disulfide bond. Cleavage gives rise to a conformation change that activates the enzyme. The same catalytic Cys residue mediates the autoproteolytic cleavage and subsequent hydrolysis of lipid substrates. The beta chain may undergo an additional C-terminal processing.

The protein resides in the lysosome. It localises to the secreted. It catalyses the reaction an N-acylsphing-4-enine + H2O = sphing-4-enine + a fatty acid. The catalysed reaction is N-dodecanoylsphing-4-enine + H2O = dodecanoate + sphing-4-enine. It carries out the reaction N-tetradecanoylsphing-4-enine + H2O = tetradecanoate + sphing-4-enine. The enzyme catalyses N-hexadecanoylsphing-4-enine + H2O = sphing-4-enine + hexadecanoate. It catalyses the reaction N-octadecanoylsphing-4-enine + H2O = sphing-4-enine + octadecanoate. The catalysed reaction is N-dodecanoyl-(4R)-hydroxysphinganine + H2O = (4R)-hydroxysphinganine + dodecanoate. It carries out the reaction N-(dodecanoyl)-sphinganine + H2O = dodecanoate + sphinganine. The enzyme catalyses N-(acetyl)-sphing-4-enine + H2O = sphing-4-enine + acetate. It catalyses the reaction N-(hexanoyl)sphing-4-enine + H2O = hexanoate + sphing-4-enine. The catalysed reaction is N-octanoylsphing-4-enine + H2O = octanoate + sphing-4-enine. It carries out the reaction N-(9Z-octadecenoyl)-sphing-4-enine + H2O = sphing-4-enine + (9Z)-octadecenoate. The enzyme catalyses N-dodecanoylethanolamine + H2O = dodecanoate + ethanolamine. Its pathway is lipid metabolism; sphingolipid metabolism. Lysosomal ceramidase that hydrolyzes sphingolipid ceramides into sphingosine and free fatty acids at acidic pH. Ceramides, sphingosine, and its phosphorylated form sphingosine-1-phosphate are bioactive lipids that mediate cellular signaling pathways regulating several biological processes including cell proliferation, apoptosis and differentiation. Has a higher catalytic efficiency towards C12-ceramides versus other ceramides. Also catalyzes the reverse reaction allowing the synthesis of ceramides from fatty acids and sphingosine. For the reverse synthetic reaction, the natural sphingosine D-erythro isomer is more efficiently utilized as a substrate compared to D-erythro-dihydrosphingosine and D-erythro-phytosphingosine, while the fatty acids with chain lengths of 12 or 14 carbons are the most efficiently used. Also has an N-acylethanolamine hydrolase activity. By regulating the levels of ceramides, sphingosine and sphingosine-1-phosphate in the epidermis, mediates the calcium-induced differentiation of epidermal keratinocytes. Also indirectly regulates tumor necrosis factor/TNF-induced apoptosis. By regulating the intracellular balance between ceramides and sphingosine, in adrenocortical cells, probably also acts as a regulator of steroidogenesis. The sequence is that of Acid ceramidase from Heterocephalus glaber (Naked mole rat).